The sequence spans 105 residues: Small ribosomal subunit protein uS10 (105 aa).

Belongs to the universal ribosomal protein uS10 family. Part of the 30S ribosomal subunit.

Functionally, involved in the binding of tRNA to the ribosomes. The polypeptide is Small ribosomal subunit protein uS10 (Rickettsia typhi (strain ATCC VR-144 / Wilmington)).